The sequence spans 383 residues: Chorismate synthase (383 aa).

Positions 39 and 45 each coordinate NADP(+). Residues 127 to 129, 249 to 250, Gly-294, 309 to 313, and Arg-335 each bind FMN; these read RAS, QS, and KPIPT.

Belongs to the chorismate synthase family. As to quaternary structure, homotetramer. FMNH2 is required as a cofactor.

The catalysed reaction is 5-O-(1-carboxyvinyl)-3-phosphoshikimate = chorismate + phosphate. The protein operates within metabolic intermediate biosynthesis; chorismate biosynthesis; chorismate from D-erythrose 4-phosphate and phosphoenolpyruvate: step 7/7. Catalyzes the anti-1,4-elimination of the C-3 phosphate and the C-6 proR hydrogen from 5-enolpyruvylshikimate-3-phosphate (EPSP) to yield chorismate, which is the branch point compound that serves as the starting substrate for the three terminal pathways of aromatic amino acid biosynthesis. This reaction introduces a second double bond into the aromatic ring system. The chain is Chorismate synthase from Caldicellulosiruptor bescii (strain ATCC BAA-1888 / DSM 6725 / KCTC 15123 / Z-1320) (Anaerocellum thermophilum).